The primary structure comprises 428 residues: 47 kDa outer membrane protein (428 aa).

A signal peptide spans 1 to 25 (MAKTSKFTQTLLASALAVVAGSASA).

It belongs to the OmpP1/FadL family.

It is found in the cell outer membrane. This chain is 47 kDa outer membrane protein, found in Pasteurella multocida (strain Pm70).